Reading from the N-terminus, the 156-residue chain is Transcriptional repressor NrdR (156 aa).

The segment at 3 to 34 (CPFCSETDTKVIDSRLVADGAQVRRRRECLTC) is a zinc-finger region. In terms of domain architecture, ATP-cone spans 49–139 (PRVIKQDGTR…VYRSFQDLSE (91 aa)).

The protein belongs to the NrdR family. Zn(2+) serves as cofactor.

Functionally, negatively regulates transcription of bacterial ribonucleotide reductase nrd genes and operons by binding to NrdR-boxes. The sequence is that of Transcriptional repressor NrdR from Saccharophagus degradans (strain 2-40 / ATCC 43961 / DSM 17024).